The following is a 152-amino-acid chain: Nucleoside diphosphate kinase B (152 aa).

The tract at residues 1–66 (MANLERTFIA…DRPFFPGLVK (66 aa)) is interaction with AKAP13. ATP-binding residues include Lys-12, Phe-60, Arg-88, Thr-94, Arg-105, and Asn-115. Catalysis depends on His-118, which acts as the Pros-phosphohistidine intermediate.

This sequence belongs to the NDK family. In terms of assembly, hexamer of two different chains: An and B (A6, A5B, A4B2, A3B3, A2B4, AB5, B6). Interacts with CAPN8. Interacts with AKAP13. Interacts with ITGB1BP1 (via C-terminal domain region). Interacts with BCL2L10. It depends on Mg(2+) as a cofactor. In terms of processing, the N-terminus is blocked.

Its subcellular location is the cytoplasm. It localises to the cell projection. The protein resides in the lamellipodium. The protein localises to the ruffle. It is found in the nucleus. It carries out the reaction a 2'-deoxyribonucleoside 5'-diphosphate + ATP = a 2'-deoxyribonucleoside 5'-triphosphate + ADP. The enzyme catalyses a ribonucleoside 5'-diphosphate + ATP = a ribonucleoside 5'-triphosphate + ADP. The catalysed reaction is ATP + protein L-histidine = ADP + protein N-phospho-L-histidine.. Its function is as follows. Major role in the synthesis of nucleoside triphosphates other than ATP. The ATP gamma phosphate is transferred to the NDP beta phosphate via a ping-pong mechanism, using a phosphorylated active-site intermediate. Negatively regulates Rho activity by interacting with AKAP13/LBC. Acts as a transcriptional activator of the MYC gene; binds DNA non-specifically. Binds to both single-stranded guanine- and cytosine-rich strands within the nuclease hypersensitive element (NHE) III(1) region of the MYC gene promoter. Does not bind to duplex NHE III(1). Has G-quadruplex (G4) DNA-binding activity, which is independent of its nucleotide-binding and kinase activity. Binds both folded and unfolded G4 with similar low nanomolar affinities. Stabilizes folded G4s regardless of whether they are prefolded or not. Exhibits histidine protein kinase activity. The polypeptide is Nucleoside diphosphate kinase B (Nme2) (Rattus norvegicus (Rat)).